The following is a 104-amino-acid chain: PTS system lactose-specific EIIA component (104 aa).

Positions 1-102 (MNRDEVQLLG…MKHLIELYKK (102 aa)) constitute a PTS EIIA type-3 domain. The Tele-phosphohistidine intermediate role is filled by H78. Position 78 is a phosphohistidine; by HPr (H78). D81 serves as a coordination point for Mg(2+).

As to quaternary structure, homotrimer. Mg(2+) serves as cofactor.

Its subcellular location is the cytoplasm. In terms of biological role, the phosphoenolpyruvate-dependent sugar phosphotransferase system (sugar PTS), a major carbohydrate active transport system, catalyzes the phosphorylation of incoming sugar substrates concomitantly with their translocation across the cell membrane. The enzyme II LacEF PTS system is involved in lactose transport. This Staphylococcus epidermidis (strain ATCC 35984 / DSM 28319 / BCRC 17069 / CCUG 31568 / BM 3577 / RP62A) protein is PTS system lactose-specific EIIA component.